The primary structure comprises 180 residues: uncharacterized protein (180 aa).

2 consecutive transmembrane segments (helical) span residues 37 to 59 and 128 to 147; these read VLHAAAAVTEYAFVLSTLVFPSF and AGSATLFAGAAGAALRVLFV.

Its subcellular location is the cell membrane. This is an uncharacterized protein from Treponema pallidum (strain Nichols).